Consider the following 426-residue polypeptide: Serine--tRNA ligase (426 aa).

233-235 (TAE) contacts L-serine. Position 264–266 (264–266 (RAE)) interacts with ATP. Glu-287 contributes to the L-serine binding site. 351–354 (EISS) is an ATP binding site. Ser-387 lines the L-serine pocket.

This sequence belongs to the class-II aminoacyl-tRNA synthetase family. Type-1 seryl-tRNA synthetase subfamily. Homodimer. The tRNA molecule binds across the dimer.

The protein resides in the cytoplasm. It carries out the reaction tRNA(Ser) + L-serine + ATP = L-seryl-tRNA(Ser) + AMP + diphosphate + H(+). The enzyme catalyses tRNA(Sec) + L-serine + ATP = L-seryl-tRNA(Sec) + AMP + diphosphate + H(+). It functions in the pathway aminoacyl-tRNA biosynthesis; selenocysteinyl-tRNA(Sec) biosynthesis; L-seryl-tRNA(Sec) from L-serine and tRNA(Sec): step 1/1. Its function is as follows. Catalyzes the attachment of serine to tRNA(Ser). Is also able to aminoacylate tRNA(Sec) with serine, to form the misacylated tRNA L-seryl-tRNA(Sec), which will be further converted into selenocysteinyl-tRNA(Sec). The chain is Serine--tRNA ligase from Clostridium novyi (strain NT).